The sequence spans 256 residues: MGQKIHPTGFRLGVIKEHRSRWFADPARYPALLQEDDQIRTYLTKQLSSAGLADIQIERKADQIDLEIRAARPGVVVGRGGSSLETLRQGLQKELSALAGQSPGSRGGGERTIRINVVEVTRADAEATLLAENIAQQLERRIAFRRIVRQVIQRAQRAGVQGIKIQIAGRLNGAEIARTEWTREGRIPLHTLRADIDYAEHLAHTTFGIIGVKVWVFKGEVLPGQERHEQKFPLQQPKRRQQRRRPTFEDRSAQEA.

The region spanning 39–121 (IRTYLTKQLS…TIRINVVEVT (83 aa)) is the KH type-2 domain. The interval 227-256 (RHEQKFPLQQPKRRQQRRRPTFEDRSAQEA) is disordered. Over residues 246–256 (PTFEDRSAQEA) the composition is skewed to basic and acidic residues.

This sequence belongs to the universal ribosomal protein uS3 family. Part of the 30S ribosomal subunit. Forms a tight complex with proteins S10 and S14.

Its function is as follows. Binds the lower part of the 30S subunit head. Binds mRNA in the 70S ribosome, positioning it for translation. This is Small ribosomal subunit protein uS3 from Synechococcus sp. (strain JA-2-3B'a(2-13)) (Cyanobacteria bacterium Yellowstone B-Prime).